The sequence spans 435 residues: D-inositol 3-phosphate glycosyltransferase (435 aa).

Position 16 (H16) interacts with 1D-myo-inositol 3-phosphate. Residues 22–23 (QP) and G30 each bind UDP-N-acetyl-alpha-D-glucosamine. Residues 27–32 (DAGGMN), K85, Y118, T142, and R162 contribute to the 1D-myo-inositol 3-phosphate site. 3 residues coordinate UDP-N-acetyl-alpha-D-glucosamine: R237, K242, and V303. Mg(2+) contacts are provided by Y312, R313, and A315. E325 and E333 together coordinate UDP-N-acetyl-alpha-D-glucosamine. Mg(2+) is bound at residue T339.

The protein belongs to the glycosyltransferase group 1 family. MshA subfamily. Homodimer.

The catalysed reaction is 1D-myo-inositol 3-phosphate + UDP-N-acetyl-alpha-D-glucosamine = 1D-myo-inositol 2-acetamido-2-deoxy-alpha-D-glucopyranoside 3-phosphate + UDP + H(+). Catalyzes the transfer of a N-acetyl-glucosamine moiety to 1D-myo-inositol 3-phosphate to produce 1D-myo-inositol 2-acetamido-2-deoxy-glucopyranoside 3-phosphate in the mycothiol biosynthesis pathway. The polypeptide is D-inositol 3-phosphate glycosyltransferase (Kineococcus radiotolerans (strain ATCC BAA-149 / DSM 14245 / SRS30216)).